A 107-amino-acid chain; its full sequence is Iron-sulfur cluster assembly protein CyaY (107 aa).

The protein belongs to the frataxin family.

In terms of biological role, involved in iron-sulfur (Fe-S) cluster assembly. May act as a regulator of Fe-S biogenesis. The sequence is that of Iron-sulfur cluster assembly protein CyaY from Neisseria gonorrhoeae (strain ATCC 700825 / FA 1090).